The primary structure comprises 72 residues: Translation initiation factor IF-1 (72 aa).

Positions 1 to 72 (MAKDDVIEVD…DKGRITYRHK (72 aa)) constitute an S1-like domain.

Belongs to the IF-1 family. In terms of assembly, component of the 30S ribosomal translation pre-initiation complex which assembles on the 30S ribosome in the order IF-2 and IF-3, IF-1 and N-formylmethionyl-tRNA(fMet); mRNA recruitment can occur at any time during PIC assembly.

Its subcellular location is the cytoplasm. Its function is as follows. One of the essential components for the initiation of protein synthesis. Stabilizes the binding of IF-2 and IF-3 on the 30S subunit to which N-formylmethionyl-tRNA(fMet) subsequently binds. Helps modulate mRNA selection, yielding the 30S pre-initiation complex (PIC). Upon addition of the 50S ribosomal subunit IF-1, IF-2 and IF-3 are released leaving the mature 70S translation initiation complex. The sequence is that of Translation initiation factor IF-1 from Helicobacter hepaticus (strain ATCC 51449 / 3B1).